The sequence spans 85 residues: Large ribosomal subunit protein bL27 (85 aa).

The interval 1 to 20 (MAHKKAGGSTRNGRDSEAKR) is disordered.

It belongs to the bacterial ribosomal protein bL27 family.

The sequence is that of Large ribosomal subunit protein bL27 from Cronobacter sakazakii (strain ATCC BAA-894) (Enterobacter sakazakii).